We begin with the raw amino-acid sequence, 344 residues long: FCS-Like Zinc finger 10 (344 aa).

The FLZ-type zinc finger occupies 270 to 314; that stretch reads DFLSFCYGCSKKLGMGEDIYMYSGYKAFCSSECRSKEIDLDEEME. The segment covering 309-320 has biased composition (acidic residues); sequence LDEEMEDGDEEE. A disordered region spans residues 309 to 344; it reads LDEEMEDGDEEEAIKSVSSSDKESKKKSNGVFFTVG.

This sequence belongs to the FLZ family. In terms of assembly, interacts with KIN10 and KIN11 via its FLZ-type zinc finger domain. Interacts with KINB1, KINB2 and KINB3 via its N-terminal part. Forms homodimer and heterodimer with FLZ2 and FLZ12 in vitro. As to expression, early expressed in hypocotyl and cotyledon and preferentially in the stelar region of the shoot and root. Later expressed in root-shoot junction, lateral root, old or senescing leaves and in pistil and pollen of flower buds or open flowers.

Its subcellular location is the cytoplasm. It is found in the nucleus. The protein resides in the endoplasmic reticulum. May act as an adapter to facilitate the interaction of SnRK1 complex with effector proteins, conferring tissue- and stimulus-type specific differences in the SnRK1 regulation pathway. Negatively regulates KIN10 leading to a repression of the SnRK1 signaling pathway. This Arabidopsis thaliana (Mouse-ear cress) protein is FCS-Like Zinc finger 10.